The primary structure comprises 340 residues: Acidic endochitinase WIN6 (340 aa).

The signal sequence occupies residues 1-22 (MSVWALFAFFSLFLSLSVRGSA). A Chitin-binding type-1 domain is found at 23-63 (EQCGRQAGDALCPGGLCCSSYGWCGTTVDYCGIGCQSQCDG). 4 disulfide bridges follow: cysteine 25–cysteine 40, cysteine 34–cysteine 46, cysteine 39–cysteine 53, and cysteine 57–cysteine 61. Positions 64-85 (GGGGDGGDDGCDGGDDGGGDGD) are spacer. A chitinase region spans residues 86-340 (DGYLSDIIPK…YGLSGLKDTM (255 aa)). Disulfide bonds link cysteine 110/cysteine 172, cysteine 183/cysteine 191, and cysteine 290/cysteine 323. Glutamate 154 (proton donor) is an active-site residue.

Belongs to the glycosyl hydrolase 19 family. Chitinase class I subfamily.

It carries out the reaction Random endo-hydrolysis of N-acetyl-beta-D-glucosaminide (1-&gt;4)-beta-linkages in chitin and chitodextrins.. Functionally, defense against chitin-containing fungal pathogens. This Populus trichocarpa (Western balsam poplar) protein is Acidic endochitinase WIN6 (WIN6).